A 410-amino-acid chain; its full sequence is Multifunctional CCA protein (410 aa).

Residues glycine 8 and arginine 11 each contribute to the ATP site. The CTP site is built by glycine 8 and arginine 11. Mg(2+) contacts are provided by aspartate 21 and aspartate 23. Residues arginine 91, arginine 138, and arginine 141 each contribute to the ATP site. The CTP site is built by arginine 91, arginine 138, and arginine 141. An HD domain is found at 229–347 (TGIHQEMVSD…AQLALVCEAD (119 aa)).

The protein belongs to the tRNA nucleotidyltransferase/poly(A) polymerase family. Bacterial CCA-adding enzyme type 1 subfamily. In terms of assembly, monomer. Can also form homodimers and oligomers. Mg(2+) serves as cofactor. The cofactor is Ni(2+).

It catalyses the reaction a tRNA precursor + 2 CTP + ATP = a tRNA with a 3' CCA end + 3 diphosphate. The catalysed reaction is a tRNA with a 3' CCA end + 2 CTP + ATP = a tRNA with a 3' CCACCA end + 3 diphosphate. Catalyzes the addition and repair of the essential 3'-terminal CCA sequence in tRNAs without using a nucleic acid template. Adds these three nucleotides in the order of C, C, and A to the tRNA nucleotide-73, using CTP and ATP as substrates and producing inorganic pyrophosphate. tRNA 3'-terminal CCA addition is required both for tRNA processing and repair. Also involved in tRNA surveillance by mediating tandem CCA addition to generate a CCACCA at the 3' terminus of unstable tRNAs. While stable tRNAs receive only 3'-terminal CCA, unstable tRNAs are marked with CCACCA and rapidly degraded. The polypeptide is Multifunctional CCA protein (Xanthomonas oryzae pv. oryzae (strain MAFF 311018)).